Here is a 1095-residue protein sequence, read N- to C-terminus: Collagen, type I, alpha 1a (1095 aa).

Over residues 1-21 (SPAMPVPGPMGPMGPRGPPGS) the composition is skewed to pro residues. The tract at residues 1-1011 (SPAMPVPGPM…QPQEKAPDPY (1011 aa)) is disordered. Low complexity predominate over residues 22–49 (PGASGPQGFTGPPGEPGEAGSAGAMGPR). Positions 58–72 (NGEDGESGKPGRGGE) are enriched in basic and acidic residues. The segment covering 127–145 (TGAAGAAGARGNDGAAGAA) has biased composition (low complexity). Positions 147 to 160 (PPGPTGPAGPPGFP) are enriched in pro residues. The span at 161–179 (GGPGAKGDAGAQGGRGPEG) shows a compositional bias: gly residues. Composition is skewed to low complexity over residues 180 to 223 (PAGA…AGAP), 232 to 270 (SGPQ…APGV), and 288 to 297 (EPGAAGARGA). Over residues 299–311 (GERGGPGGRGFPG) the composition is skewed to gly residues. Composition is skewed to low complexity over residues 385 to 400 (VGAR…PGPK), 477 to 489 (LPGE…PAGA), 498 to 544 (ERGA…QGMP), and 577 to 592 (RGLT…AGAT). The span at 602–611 (GPVGPGGARG) shows a compositional bias: gly residues. Composition is skewed to low complexity over residues 625 to 661 (AGFA…AGPT) and 675 to 697 (PKGA…AGRV). The segment covering 699 to 712 (PPGPSGNPGPPGPA) has biased composition (pro residues). Over residues 804-822 (PGLAGAPGEPGREGSPGNE) the composition is skewed to low complexity. The segment covering 848–858 (APGPPGAPGPV) has biased composition (pro residues). Residues 872–893 (PAGPAGSAGPAGPRGPAGALGL) are compositionally biased toward low complexity. Residues 894–908 (RGDKGESGEAGERGM) are compositionally biased toward basic and acidic residues. Residues 924-960 (AGSSGEQGPAGAAGPAGPRGPAGSAGSPGKDGMSGLP) are compositionally biased toward low complexity. The span at 976–988 (AGPPGPPGPPGAP) shows a compositional bias: pro residues. One can recognise a Fibrillar collagen NC1 domain in the interval 1062–1095 (TGTWGKLPLLDLAPMDVGAPDQEFGLEVGPVCFL).

It belongs to the fibrillar collagen family.

It is found in the secreted. It localises to the extracellular space. The protein resides in the extracellular matrix. The chain is Collagen, type I, alpha 1a from Epinephelus caninus (Dogtooth grouper).